The primary structure comprises 385 residues: MNKGSRDNNHSDRGISVVLAGGGTAGHVEPAMAVADALRALDPDVRITALGTQRGLETRLVPQRGYDLELITPVPLPRKPSKDLLRLPMRVRTAIRQTRDVLTGVNADVVVGFGGYVALPAYLAARGGLTGRRKVPVVVHEANARAGLANRVGARSARRVLSAVPDSGLRNVEVVGVPVRESITSLDRAALRAQARAEFGFAEDARVLLVFGGSQGAQSINRAVSAAAKDLAAAGISVLHAHGPKNTLDLPPADPQAPPYVAVPYLDRMDLAYAAADLAICRSGAMTVAEVTAVGLPAIYVPLPIGNGEQRLNALPVVDAGGGLLVDDADLSGDTVARTVIPLLTDDSKLAAMTAAASLSGHPDAARRVAQVALEIARAARKKAS.

UDP-N-acetyl-alpha-D-glucosamine is bound by residues 24-26 (TAG), Asn143, Arg180, Ser214, and Gln310.

This sequence belongs to the glycosyltransferase 28 family. MurG subfamily.

The protein resides in the cell membrane. The enzyme catalyses di-trans,octa-cis-undecaprenyl diphospho-N-acetyl-alpha-D-muramoyl-L-alanyl-D-glutamyl-meso-2,6-diaminopimeloyl-D-alanyl-D-alanine + UDP-N-acetyl-alpha-D-glucosamine = di-trans,octa-cis-undecaprenyl diphospho-[N-acetyl-alpha-D-glucosaminyl-(1-&gt;4)]-N-acetyl-alpha-D-muramoyl-L-alanyl-D-glutamyl-meso-2,6-diaminopimeloyl-D-alanyl-D-alanine + UDP + H(+). It functions in the pathway cell wall biogenesis; peptidoglycan biosynthesis. In terms of biological role, cell wall formation. Catalyzes the transfer of a GlcNAc subunit on undecaprenyl-pyrophosphoryl-MurNAc-pentapeptide (lipid intermediate I) to form undecaprenyl-pyrophosphoryl-MurNAc-(pentapeptide)GlcNAc (lipid intermediate II). This is UDP-N-acetylglucosamine--N-acetylmuramyl-(pentapeptide) pyrophosphoryl-undecaprenol N-acetylglucosamine transferase from Mycolicibacterium smegmatis (strain ATCC 700084 / mc(2)155) (Mycobacterium smegmatis).